Reading from the N-terminus, the 364-residue chain is tRNA N6-adenosine threonylcarbamoyltransferase (364 aa).

The Fe cation site is built by His115 and His119. Substrate is bound by residues 137–141, Asp170, Gly183, and Asn288; that span reads LVSGG. Asp316 lines the Fe cation pocket.

Belongs to the KAE1 / TsaD family. Fe(2+) is required as a cofactor.

The protein localises to the cytoplasm. The catalysed reaction is L-threonylcarbamoyladenylate + adenosine(37) in tRNA = N(6)-L-threonylcarbamoyladenosine(37) in tRNA + AMP + H(+). Functionally, required for the formation of a threonylcarbamoyl group on adenosine at position 37 (t(6)A37) in tRNAs that read codons beginning with adenine. Is involved in the transfer of the threonylcarbamoyl moiety of threonylcarbamoyl-AMP (TC-AMP) to the N6 group of A37, together with TsaE and TsaB. TsaD likely plays a direct catalytic role in this reaction. The protein is tRNA N6-adenosine threonylcarbamoyltransferase of Bartonella tribocorum (strain CIP 105476 / IBS 506).